Consider the following 398-residue polypeptide: Diaminopropionate ammonia-lyase (398 aa).

K77 bears the N6-(pyridoxal phosphate)lysine mark.

This sequence belongs to the diaminopropionate ammonia-lyase family. Homodimer. Pyridoxal 5'-phosphate serves as cofactor.

It catalyses the reaction (S)-2,3-diaminopropanoate + H2O + H(+) = pyruvate + 2 NH4(+). The catalysed reaction is (R)-2,3-diaminopropanoate + H2O + H(+) = pyruvate + 2 NH4(+). Its function is as follows. Catalyzes the alpha,beta-elimination reaction of both L- and D-alpha,beta-diaminopropionate (DAP) to form pyruvate and ammonia. The D-isomer of serine is degraded to pyruvate, though very poorly; other amino acids (L-serine, D- and L-threonine, D- and L-beta-Cl-alanine) are not substrates. The chain is Diaminopropionate ammonia-lyase (ygeX) from Escherichia coli O157:H7.